Here is a 360-residue protein sequence, read N- to C-terminus: 3-dehydroquinate synthase (360 aa).

NAD(+)-binding positions include D72 to K77, G106 to D110, T130 to T131, K143, and K152. Zn(2+) contacts are provided by E185, H248, and H265.

It belongs to the sugar phosphate cyclases superfamily. Dehydroquinate synthase family. It depends on Co(2+) as a cofactor. Zn(2+) serves as cofactor. Requires NAD(+) as cofactor.

The protein localises to the cytoplasm. The catalysed reaction is 7-phospho-2-dehydro-3-deoxy-D-arabino-heptonate = 3-dehydroquinate + phosphate. Its pathway is metabolic intermediate biosynthesis; chorismate biosynthesis; chorismate from D-erythrose 4-phosphate and phosphoenolpyruvate: step 2/7. Functionally, catalyzes the conversion of 3-deoxy-D-arabino-heptulosonate 7-phosphate (DAHP) to dehydroquinate (DHQ). The sequence is that of 3-dehydroquinate synthase from Geotalea uraniireducens (strain Rf4) (Geobacter uraniireducens).